The sequence spans 440 residues: Putative sodium-coupled neutral amino acid transporter 8 (440 aa).

Helical transmembrane passes span 29–49 (AIFIMLKSALGAGLLNFPWAF), 58–78 (AIMVELVSLIFLISGLVILGY), 100–120 (IGKLCGICYIINLFMICVAFL), 156–176 (FAITVLCLVIILPLSIPKEIS), 183–203 (ILGTLAACYLTVMIIIKYYVM), 223–243 (MFSVVPTICFGFQCHEACVTI), 255–275 (WAAVSVVSMLICLLIYSFTGI), 300–320 (VIIARLLFTISIITIYPIILL), 350–370 (VVITVLWILVTLLIALFVPDI), 373–393 (VISVIGGISAFFIFIFPGLCL), and 418–438 (VVCGAFVFGQSTTIAVMEIIA).

The protein belongs to the amino acid/polyamine transporter 2 family.

It is found in the membrane. Its function is as follows. Putative sodium-dependent amino acid/proton antiporter. In Xenopus tropicalis (Western clawed frog), this protein is Putative sodium-coupled neutral amino acid transporter 8 (slc38a8).